Consider the following 51-residue polypeptide: UPF0391 membrane protein Psyc_0130 (51 aa).

2 consecutive transmembrane segments (helical) span residues 6 to 26 (IIFA…VAGL) and 28 to 47 (ANFA…VAFV).

The protein belongs to the UPF0391 family.

It localises to the cell membrane. This Psychrobacter arcticus (strain DSM 17307 / VKM B-2377 / 273-4) protein is UPF0391 membrane protein Psyc_0130.